The sequence spans 245 residues: MGRKDKRWVLQRKRDFYYKLAKKLKYRSRASFKLMQLNEKFNVIKPGKIVLDLGCAPGGWMQVAREIVGDKGFVIGIDLQPVKPFEYDNVVAIKGDFTLEENLNKIRELIPNDEKKVDVVISDASPNISGYWDIDHARSIDLVTTALQIATEMLKERGNFVAKVFYGDMIDDYVNLVKKYFEKVYITKPQASRKESAEVYVIAKRYTGKKWEEEDKIKRVKKVENEDNELLAKKIKEIRKLKSKK.

Residues Gly-58, Trp-60, Asp-78, Asp-96, and Asp-123 each contribute to the S-adenosyl-L-methionine site. Residue Lys-163 is the Proton acceptor of the active site.

Belongs to the class I-like SAM-binding methyltransferase superfamily. RNA methyltransferase RlmE family.

It localises to the cytoplasm. The catalysed reaction is uridine(2552) in 23S rRNA + S-adenosyl-L-methionine = 2'-O-methyluridine(2552) in 23S rRNA + S-adenosyl-L-homocysteine + H(+). In terms of biological role, specifically methylates the uridine in position 2552 of 23S rRNA at the 2'-O position of the ribose in the fully assembled 50S ribosomal subunit. The sequence is that of Ribosomal RNA large subunit methyltransferase E from Methanocaldococcus jannaschii (strain ATCC 43067 / DSM 2661 / JAL-1 / JCM 10045 / NBRC 100440) (Methanococcus jannaschii).